A 230-amino-acid chain; its full sequence is Fibrillarin-like rRNA/tRNA 2'-O-methyltransferase (230 aa).

S-adenosyl-L-methionine-binding positions include 87–88 (TT), 105–106 (EY), 130–131 (DA), and 150–153 (DVAQ).

In terms of assembly, interacts with nop5. Component of box C/D small ribonucleoprotein (sRNP) particles that contain rpl7ae, FlpA and nop5, plus a guide RNA.

In terms of biological role, involved in pre-rRNA and tRNA processing. Utilizes the methyl donor S-adenosyl-L-methionine to catalyze the site-specific 2'-hydroxyl methylation of ribose moieties in rRNA and tRNA. Site specificity is provided by a guide RNA that base pairs with the substrate. Methylation occurs at a characteristic distance from the sequence involved in base pairing with the guide RNA. This is Fibrillarin-like rRNA/tRNA 2'-O-methyltransferase from Methanocaldococcus jannaschii (strain ATCC 43067 / DSM 2661 / JAL-1 / JCM 10045 / NBRC 100440) (Methanococcus jannaschii).